Here is a 130-residue protein sequence, read N- to C-terminus: Small ribosomal subunit protein uS9 (130 aa).

This sequence belongs to the universal ribosomal protein uS9 family.

The chain is Small ribosomal subunit protein uS9 from Pseudomonas fluorescens (strain ATCC BAA-477 / NRRL B-23932 / Pf-5).